We begin with the raw amino-acid sequence, 416 residues long: Serine hydroxymethyltransferase (416 aa).

(6S)-5,6,7,8-tetrahydrofolate contacts are provided by residues Leu121 and 125 to 127 (GHL). Lys230 is subject to N6-(pyridoxal phosphate)lysine. 355–357 (SPF) serves as a coordination point for (6S)-5,6,7,8-tetrahydrofolate.

This sequence belongs to the SHMT family. As to quaternary structure, homodimer. The cofactor is pyridoxal 5'-phosphate.

The protein localises to the cytoplasm. The catalysed reaction is (6R)-5,10-methylene-5,6,7,8-tetrahydrofolate + glycine + H2O = (6S)-5,6,7,8-tetrahydrofolate + L-serine. The protein operates within one-carbon metabolism; tetrahydrofolate interconversion. Its pathway is amino-acid biosynthesis; glycine biosynthesis; glycine from L-serine: step 1/1. Catalyzes the reversible interconversion of serine and glycine with tetrahydrofolate (THF) serving as the one-carbon carrier. This reaction serves as the major source of one-carbon groups required for the biosynthesis of purines, thymidylate, methionine, and other important biomolecules. Also exhibits THF-independent aldolase activity toward beta-hydroxyamino acids, producing glycine and aldehydes, via a retro-aldol mechanism. The chain is Serine hydroxymethyltransferase from Streptococcus thermophilus (strain CNRZ 1066).